Here is a 437-residue protein sequence, read N- to C-terminus: Tryptophan--tRNA ligase (437 aa).

A 'HIGH' region motif is present at residues 74-82 (PSGKVHLGH). Residues 321 to 325 (KMSSS) carry the 'KMSKS' region motif.

It belongs to the class-I aminoacyl-tRNA synthetase family.

It is found in the cytoplasm. The enzyme catalyses tRNA(Trp) + L-tryptophan + ATP = L-tryptophyl-tRNA(Trp) + AMP + diphosphate + H(+). This is Tryptophan--tRNA ligase from Methanosarcina acetivorans (strain ATCC 35395 / DSM 2834 / JCM 12185 / C2A).